A 281-amino-acid chain; its full sequence is Probable endonuclease 4 (281 aa).

Positions 69, 109, 145, 179, 182, 216, 229, 231, and 261 each coordinate Zn(2+).

Belongs to the AP endonuclease 2 family. The cofactor is Zn(2+).

It catalyses the reaction Endonucleolytic cleavage to 5'-phosphooligonucleotide end-products.. Functionally, endonuclease IV plays a role in DNA repair. It cleaves phosphodiester bonds at apurinic or apyrimidinic (AP) sites, generating a 3'-hydroxyl group and a 5'-terminal sugar phosphate. The polypeptide is Probable endonuclease 4 (Aeromonas hydrophila subsp. hydrophila (strain ATCC 7966 / DSM 30187 / BCRC 13018 / CCUG 14551 / JCM 1027 / KCTC 2358 / NCIMB 9240 / NCTC 8049)).